A 404-amino-acid polypeptide reads, in one-letter code: FKFRQSPSSPRFRLNSRNWALNVTTPLTVDSSSSPPIEEEPKTQRFDPGAPPPFNLADIRAAIPKHCWVKNPWKSMSYVVRELAIVFALAAGAAYLNNWLVWPLYWIAQGTMFWALFVLGHDCGHGSFSNDPRLNSVVGHLLHSSILVPYHGWRISHRTHHQNHGHVENDESWHPMSEKIYKSLDKPTRFFRFTLPLVMLAYPFYLWARSPGKKGSHYHPDSDLFLPKERNDVLTSTACWTAMAVLLVCLNFVMGPMQMLKLYVIPYWINVMWLDFVTYLHHHGHEDKLPWYRGKEWSYLRGGLTTLDRDYGLINNIHHDIGTHVIHHLFPQIPHYHLVEATEAAKPVLGKYYREPDKSGPLPLHLLGILAKSIKEDHFVSDEGDVVYYEADPNLYGEIKVTAE.

Residues Thr28–Ala50 are disordered. Residues His121–His125 carry the Histidine box-1 motif. The Histidine box-2 motif lies at His157–His161. Positions His324–His328 match the Histidine box-3 motif.

This sequence belongs to the fatty acid desaturase type 1 family.

The protein localises to the plastid. It localises to the chloroplast membrane. It participates in lipid metabolism; polyunsaturated fatty acid biosynthesis. In terms of biological role, chloroplast omega-3 fatty acid desaturase introduces the third double bond in the biosynthesis of 16:3 and 18:3 fatty acids, important constituents of plant membranes. It is thought to use ferredoxin as an electron donor and to act on fatty acids esterified to galactolipids, sulfolipids and phosphatidylglycerol. The protein is Omega-3 fatty acid desaturase, chloroplastic (FAD7) of Brassica napus (Rape).